We begin with the raw amino-acid sequence, 315 residues long: piRNA biogenesis protein EXD1 (315 aa).

The 3'-5' exonuclease domain occupies 141 to 228 (IYIFDIQVMQ…ECLTNYLGLQ (88 aa)).

The protein belongs to the EXD1 family. Homodimer. Component of the PET complex, at least composed of EXD1, SIWI, TDRD12 and piRNAs.

It is found in the cytoplasm. Its function is as follows. RNA-binding component of the PET complex, a multiprotein complex required for the processing of piRNAs during spermatogenesis. The piRNA metabolic process mediates the repression of transposable elements during meiosis by forming complexes composed of piRNAs and Piwi proteins and governs the methylation and subsequent repression of transposable elements, preventing their mobilization, which is essential for the germline integrity. The PET complex is required during the secondary piRNAs metabolic process for the PIWIL2 slicing-triggered loading of PIWIL4 piRNAs. In the PET complex, EXD1 probably acts as an RNA adapter. EXD1 is an inactive exonuclease. This chain is piRNA biogenesis protein EXD1, found in Bombyx mori (Silk moth).